The following is a 107-amino-acid chain: DNA-directed RNA polymerase subunit omega (107 aa).

A disordered region spans residues 81–107; that stretch reads MEEEAAKGNADAGQGEGDAPKTPGQDG.

The protein belongs to the RNA polymerase subunit omega family. In terms of assembly, the RNAP catalytic core consists of 2 alpha, 1 beta, 1 beta' and 1 omega subunit. When a sigma factor is associated with the core the holoenzyme is formed, which can initiate transcription.

The enzyme catalyses RNA(n) + a ribonucleoside 5'-triphosphate = RNA(n+1) + diphosphate. Promotes RNA polymerase assembly. Latches the N- and C-terminal regions of the beta' subunit thereby facilitating its interaction with the beta and alpha subunits. The polypeptide is DNA-directed RNA polymerase subunit omega (Alkalilimnicola ehrlichii (strain ATCC BAA-1101 / DSM 17681 / MLHE-1)).